Here is a 1733-residue protein sequence, read N- to C-terminus: Serine-aspartate repeat-containing protein F (1733 aa).

The signal sequence occupies residues 1 to 45; sequence MKKRRQGPINKRVDFLSNKVNKYSIRKFTVGTASILVGATLMFGA. Residues 46-678 are ligand binding A region; the sequence is ADNEAKAAED…GSSTAQGDNP (633 aa). 2 disordered regions span residues 51–269 and 332–351; these read KAAE…SVND and PLALNRSQSKNSPHKSASPR. Over residues 61–74 the composition is skewed to basic and acidic residues; that stretch reads ASKEEQKGSRDNEN. 2 stretches are compositionally biased toward polar residues: residues 85 to 99 and 146 to 168; these read GSHSSEKTTNVNNAT and PKTSTTQQDSTEKNNPSLKDNLN. The span at 175-184 shows a compositional bias: basic and acidic residues; that stretch reads KESKTDEHST. The segment covering 186 to 226 has biased composition (polar residues); that stretch reads QAQMSTNKSNLDTNDSPTQSEKTSSQANNDSTDNQSAPSKQ. Residues 227-253 show a composition bias toward basic and acidic residues; the sequence is LDSKPSEQKVYKTKFNDEPTQDVEHTT. 2 stretches are compositionally biased toward polar residues: residues 255–266 and 336–346; these read KLKTPSVSTDSS and NRSQSKNSPHK. CNA-B domains lie at 679 to 797, 798 to 907, 908 to 1018, and 1019 to 1129; these read TYSL…YLTP, KYNV…FYKP, TYNL…YKTP, and KYSV…FDDD. A type I collagen binding region region spans residues 679–1129; it reads TYSLGDYVWL…SIDNGYFDDD (451 aa). The interval 862-890 is disordered; it reads FETPEGYTPTKQNSGSDEGKDSNGTKTTV. A disordered region spans residues 1085 to 1708; it reads KPEGMTQTTA…ANEDHDSKGT (624 aa). Positions 1107–1119 are enriched in basic and acidic residues; the sequence is EDVRVTITDHDDF. Residues 1125–1684 show a composition bias toward acidic residues; it reads YFDDDSDSDS…DSDSDSDSDS (560 aa). The span at 1685–1706 shows a compositional bias: basic and acidic residues; it reads DSDKNAKDKLPDTGANEDHDSK. Residues 1694 to 1698 carry the LPXTG sorting signal motif; that stretch reads LPDTG. Pentaglycyl murein peptidoglycan amidated threonine is present on Thr-1697. A propeptide spans 1698–1733 (removed by sortase); the sequence is GANEDHDSKGTLLGTLFAGLGALLLGRRRKKDNKEK.

This sequence belongs to the serine-aspartate repeat-containing protein (SDr) family.

The protein resides in the secreted. It localises to the cell wall. Binds to type I collagen via alpha-2(I) or alpha-1(I) chains, although its affinity for the alpha-1(I) chain is significantly higher. Involved in bacterial adherence to transcutaneous drivelines from explanted ventricular assist devices. This chain is Serine-aspartate repeat-containing protein F (sdrF), found in Staphylococcus epidermidis.